Consider the following 246-residue polypeptide: 1-(5-phosphoribosyl)-5-[(5-phosphoribosylamino)methylideneamino] imidazole-4-carboxamide isomerase (246 aa).

The Proton acceptor role is filled by Asp10. The Proton donor role is filled by Asp135.

It belongs to the HisA/HisF family.

The protein localises to the cytoplasm. It carries out the reaction 1-(5-phospho-beta-D-ribosyl)-5-[(5-phospho-beta-D-ribosylamino)methylideneamino]imidazole-4-carboxamide = 5-[(5-phospho-1-deoxy-D-ribulos-1-ylimino)methylamino]-1-(5-phospho-beta-D-ribosyl)imidazole-4-carboxamide. It functions in the pathway amino-acid biosynthesis; L-histidine biosynthesis; L-histidine from 5-phospho-alpha-D-ribose 1-diphosphate: step 4/9. In Methanococcoides burtonii (strain DSM 6242 / NBRC 107633 / OCM 468 / ACE-M), this protein is 1-(5-phosphoribosyl)-5-[(5-phosphoribosylamino)methylideneamino] imidazole-4-carboxamide isomerase.